Reading from the N-terminus, the 255-residue chain is UDP-2,3-diacylglucosamine hydrolase (255 aa).

5 residues coordinate Mn(2+): D8, H10, D41, N79, and H114. Position 79–80 (79–80 (NR)) interacts with substrate. D122, S160, N164, K167, and H195 together coordinate substrate. Mn(2+)-binding residues include H195 and H197.

This sequence belongs to the LpxH family. It depends on Mn(2+) as a cofactor.

Its subcellular location is the cell inner membrane. It catalyses the reaction UDP-2-N,3-O-bis[(3R)-3-hydroxytetradecanoyl]-alpha-D-glucosamine + H2O = 2-N,3-O-bis[(3R)-3-hydroxytetradecanoyl]-alpha-D-glucosaminyl 1-phosphate + UMP + 2 H(+). It functions in the pathway glycolipid biosynthesis; lipid IV(A) biosynthesis; lipid IV(A) from (3R)-3-hydroxytetradecanoyl-[acyl-carrier-protein] and UDP-N-acetyl-alpha-D-glucosamine: step 4/6. Its function is as follows. Hydrolyzes the pyrophosphate bond of UDP-2,3-diacylglucosamine to yield 2,3-diacylglucosamine 1-phosphate (lipid X) and UMP by catalyzing the attack of water at the alpha-P atom. Involved in the biosynthesis of lipid A, a phosphorylated glycolipid that anchors the lipopolysaccharide to the outer membrane of the cell. The chain is UDP-2,3-diacylglucosamine hydrolase from Hamiltonella defensa subsp. Acyrthosiphon pisum (strain 5AT).